We begin with the raw amino-acid sequence, 336 residues long: uncharacterized protein (336 aa).

Disordered stretches follow at residues 29–93 (GGVS…HSGA) and 116–147 (LQERPAASQPWRTASAQKQHGSSQPHQGGVTG). 2 stretches are compositionally biased toward polar residues: residues 70-82 (SGGSCEGLSTSTA) and 125-141 (PWRTASAQKQHGSSQPH).

This is an uncharacterized protein from Bos taurus (Bovine).